A 520-amino-acid chain; its full sequence is Pentatricopeptide repeat-containing protein At1g28690, mitochondrial (520 aa).

The N-terminal 19 residues, 1–19 (MRIFRFTSISPRILPSNHY), are a transit peptide targeting the mitochondrion. PPR repeat units lie at residues 68 to 98 (DLNI…LPKP), 99 to 133 (TLSA…GEKA), 134 to 168 (DGYT…RIIK), 174 to 208 (DDVL…NVVC), 209 to 235 (CTSM…TKVK), 236 to 271 (DIVV…GFHP), 272 to 306 (NIST…GVYT), 307 to 337 (HIKM…MQEK), 338 to 372 (NVFS…RIEP), 373 to 403 (NYVT…MQRD), and 409 to 439 (KMEH…MPER). The type E motif stretch occupies residues 444-520 (IWAALLSSCN…TIGRSWTSED (77 aa)).

Belongs to the PPR family. PCMP-E subfamily.

It is found in the mitochondrion. This chain is Pentatricopeptide repeat-containing protein At1g28690, mitochondrial (PCMP-E34), found in Arabidopsis thaliana (Mouse-ear cress).